A 704-amino-acid chain; its full sequence is Histone-lysine N-methyltransferase, H3 lysine-9 specific SUVH1 (704 aa).

2 disordered regions span residues 1-21 and 68-176; these read MEQG…TRVL and PFVA…QAEG. 2 stretches are compositionally biased toward polar residues: residues 80–90 and 109–121; these read ESSQQTPSGVP and SFRT…GNSG. Over residues 159–170 the composition is skewed to basic residues; sequence GKKRGRPKKPRR. The region spanning 265–412 is the YDG domain; sequence GNAPGIEVGD…CNVFKYKLLR (148 aa). The 62-residue stretch at 487–548 folds into the Pre-SET domain; that stretch reads PSCHCVGGCQ…NCRNRMSQGG (62 aa). Positions 489, 491, 495, 502, 504, 530, 534, 536, and 540 each coordinate Zn(2+). The SET domain maps to 551-681; it reads ARLEVFKTKN…PMQELTFDYG (131 aa). S-adenosyl-L-methionine-binding positions include 561–563, Asp-593, Tyr-595, Arg-635, and 638–639; these read RGW and NH. 4 residues coordinate Zn(2+): Cys-641, Cys-692, Cys-694, and Cys-699. The Post-SET domain occupies 688 to 704; sequence RRKKCLCGSLNCRGYFY.

This sequence belongs to the class V-like SAM-binding methyltransferase superfamily. Histone-lysine methyltransferase family. Suvar3-9 subfamily. As to quaternary structure, interacts with LHP1. As to expression, expressed in roots, stems, leaves and flowers.

The protein localises to the nucleus. It localises to the chromosome. It catalyses the reaction N(6)-methyl-L-lysyl(27)-[histone H3] + S-adenosyl-L-methionine = N(6),N(6)-dimethyl-L-lysyl(27)-[histone H3] + S-adenosyl-L-homocysteine + H(+). It carries out the reaction L-lysyl(9)-[histone H3] + 2 S-adenosyl-L-methionine = N(6),N(6)-dimethyl-L-lysyl(9)-[histone H3] + 2 S-adenosyl-L-homocysteine + 2 H(+). The catalysed reaction is L-lysyl(27)-[histone H3] + S-adenosyl-L-methionine = N(6)-methyl-L-lysyl(27)-[histone H3] + S-adenosyl-L-homocysteine + H(+). Histone methyltransferase. Methylates in vitro both 'Lys-9' and 'Lys-27' of histone H3. Required for in vivo dimethylation of 'Lys-9'. H3 'Lys-9' methylation represents a specific tag for epigenetic control for plant development and transcriptional repression. This chain is Histone-lysine N-methyltransferase, H3 lysine-9 specific SUVH1 (SUVH1), found in Nicotiana tabacum (Common tobacco).